The sequence spans 610 residues: Replication factor C large subunit (610 aa).

An ATP-binding site is contributed by 55 to 62 (GPAGIGKT). Basic and acidic residues-rich tracts occupy residues 467-478 (EKEGNASAEKPE), 502-515 (LPEK…KLPE), and 594-603 (DGSKKAEPKN). Residues 467 to 610 (EKEGNASAEK…PKNQKTLFDF (144 aa)) are disordered.

The protein belongs to the activator 1 small subunits family. RfcL subfamily. Heteromultimer composed of small subunits (RfcS) and large subunits (RfcL).

Functionally, part of the RFC clamp loader complex which loads the PCNA sliding clamp onto DNA. This is Replication factor C large subunit from Methanosarcina mazei (strain ATCC BAA-159 / DSM 3647 / Goe1 / Go1 / JCM 11833 / OCM 88) (Methanosarcina frisia).